Reading from the N-terminus, the 197-residue chain is Probable NADPH:quinone oxidoreductase 1 (197 aa).

The protein belongs to the SsuE family. Homotetramer. The cofactor is FMN.

The enzyme catalyses a quinone + NADH + H(+) = a quinol + NAD(+). The catalysed reaction is a quinone + NADPH + H(+) = a quinol + NADP(+). Functionally, the enzyme apparently serves as a quinone reductase in connection with conjugation reactions of hydroquinones involved in detoxification pathways. The polypeptide is Probable NADPH:quinone oxidoreductase 1 (Oryza sativa subsp. japonica (Rice)).